The sequence spans 329 residues: Protein PRY2 (329 aa).

Positions 1–18 (MKFSKVSLLAASASVALS) are cleaved as a signal peptide. Polar residues predominate over residues 122-131 (TSASATQDDV). The disordered stretch occupies residues 122–197 (TSASATQDDV…SSSDFSTSMV (76 aa)). The segment covering 132 to 190 (TTTLTSSTQPTSTTTPTTTTTSPTTTTSPTTTASPTTTASPTTATTTQSTASSTQSSSS) has biased composition (low complexity). The SCP domain occupies 197 to 311 (VNEHNTKRAL…EWGDYIICSY (115 aa)).

The protein belongs to the CRISP family. In terms of processing, O-glycosylated.

It is found in the secreted. Secreted protein required for efficient export of lipids such as acetylated sterols. Acts in detoxification of hydrophobic compounds. The protein is Protein PRY2 (PRY2) of Saccharomyces cerevisiae (strain ATCC 204508 / S288c) (Baker's yeast).